We begin with the raw amino-acid sequence, 558 residues long: Ribonuclease J (558 aa).

Histidine 81, histidine 83, aspartate 85, histidine 86, histidine 148, and aspartate 170 together coordinate Zn(2+). Residue 371 to 375 (HVSGH) participates in substrate binding. Histidine 397 is a Zn(2+) binding site.

This sequence belongs to the metallo-beta-lactamase superfamily. RNA-metabolizing metallo-beta-lactamase-like family. Bacterial RNase J subfamily. In terms of assembly, homodimer. Requires Zn(2+) as cofactor.

The protein resides in the cytoplasm. In terms of biological role, an RNase that has endonuclease and 5'-3' exonuclease activity. The 5'-exonuclease activity acts on 5'-monophosphate but not 5'-triphosphate ends. Endonuclease activity can cleave within 4 nucleotides of the 5'-end of a triphosphorylated RNA. Plays the major role in pre-23S rRNA maturation, and a minor role in processing of pre-5S and pre-16S rRNA. This chain is Ribonuclease J, found in Mycolicibacterium smegmatis (strain ATCC 700084 / mc(2)155) (Mycobacterium smegmatis).